The following is a 214-amino-acid chain: Cytochrome c biogenesis ATP-binding export protein CcmA (214 aa).

In terms of domain architecture, ABC transporter spans 12-214 (LAARALAFSR…TRMLTLEAAA (203 aa)). 44-51 (GDNGAGKT) contacts ATP.

Belongs to the ABC transporter superfamily. CcmA exporter (TC 3.A.1.107) family. In terms of assembly, the complex is composed of two ATP-binding proteins (CcmA) and two transmembrane proteins (CcmB).

The protein localises to the cell inner membrane. It carries out the reaction heme b(in) + ATP + H2O = heme b(out) + ADP + phosphate + H(+). Functionally, part of the ABC transporter complex CcmAB involved in the biogenesis of c-type cytochromes; once thought to export heme, this seems not to be the case, but its exact role is uncertain. Responsible for energy coupling to the transport system. The protein is Cytochrome c biogenesis ATP-binding export protein CcmA of Xanthomonas campestris pv. campestris (strain 8004).